Consider the following 30-residue polypeptide: uncharacterized protein (30 aa).

This is an uncharacterized protein from Treponema pallidum (strain Nichols).